The following is an 827-amino-acid chain: SID1 transmembrane family member 1 (827 aa).

Residues 1 to 19 (MRGCLRLALLCALPWLLLA) form the signal peptide. Topologically, residues 20–309 (ASPGHPAKSP…SIKESVYVKS (290 aa)) are extracellular. Asn-57, Asn-67, Asn-83, Asn-136, and Asn-282 each carry an N-linked (GlcNAc...) asparagine glycan. The helical transmembrane segment at 310 to 330 (SLFSVFIFLSFYLGCLLVGFV) threads the bilayer. Topologically, residues 331–442 (HYLRFQRKSI…DRRIVSKKYK (112 aa)) are cytoplasmic. The segment at 355-408 (ASHPIAASTPEGSNYGTIDESSSSPGRQMSSSDGGPPGQSDTDSSVEESDFDTM) is disordered. Residues 364–374 (PEGSNYGTIDE) show a composition bias toward polar residues. A compositionally biased stretch (low complexity) spans 375 to 397 (SSSSPGRQMSSSDGGPPGQSDTD). Acidic residues predominate over residues 398-408 (SSVEESDFDTM). A helical membrane pass occupies residues 443 to 463 (IYFWNIITIAVFYALPVIQLV). Residues 464-494 (ITYQTVVNVTGNQDICYYNFLCAHPLGVLSA) are Extracellular-facing. The N-linked (GlcNAc...) asparagine glycan is linked to Asn-471. A helical transmembrane segment spans residues 495-515 (FNNILSNLGHVLLGFLFLLIV). Residues 516–541 (LRRDILHRRALEAKDIFAVEYGIPKH) are Cytoplasmic-facing. The helical transmembrane segment at 542 to 562 (FGLFYAMGIALMMEGVLSACY) threads the bilayer. Residues 563-572 (HVCPNYSNFQ) lie on the Extracellular side of the membrane. Asn-567 is a glycosylation site (N-linked (GlcNAc...) asparagine). A helical transmembrane segment spans residues 573-590 (FDTSFMYMIAGLCMLKLY). The Cytoplasmic segment spans residues 591–600 (QTRHPDINAS). The chain crosses the membrane as a helical span at residues 601 to 621 (AYSAYASFAVVIMVTVLGVVF). The Extracellular segment spans residues 622 to 626 (GKNDV). Residues 627–647 (WFWVIFSAIHVLASLALSTQI) form a helical membrane-spanning segment. The Cytoplasmic portion of the chain corresponds to 648-683 (YYMGRFKIDLGIFRRAAMVFYTDCIQQCSRPLYMDR). The chain crosses the membrane as a helical span at residues 684–704 (MVLLVVGNLVNWSFALFGLIY). The Extracellular segment spans residues 705–710 (RPRDFA). Residues 711-731 (SYMLGIFICNLLLYLAFYIIM) form a helical membrane-spanning segment. The Cytoplasmic segment spans residues 732-741 (KLRSSEKVLP). The helical transmembrane segment at 742-762 (VPLFCIVATAVMWAAALYFFF) threads the bilayer. Residues 763 to 791 (QNLSSWEGTPAESREKNRECILLDFFDDH) are Extracellular-facing. A glycan (N-linked (GlcNAc...) asparagine) is linked at Asn-764. Residues 792–812 (DIWHFLSATALFFSFLVLLTL) form a helical membrane-spanning segment. The Cytoplasmic segment spans residues 813-827 (DDDLDVVRRDQIPVF).

The protein belongs to the SID1 family.

Its subcellular location is the membrane. Functionally, in vitro binds long double-stranded RNA (dsRNA) (500 and 700 base pairs), but not dsRNA shorter than 300 bp. Not involved in RNA autophagy, a process in which RNA is directly imported into lysosomes in an ATP-dependent manner, and degraded. In Homo sapiens (Human), this protein is SID1 transmembrane family member 1 (SIDT1).